A 214-amino-acid chain; its full sequence is Putative glucose-6-phosphate isomerase 1 (214 aa).

Fe cation is bound by residues His-92, His-94, Glu-101, and His-140.

This sequence belongs to the archaeal-type GPI family. As to quaternary structure, homodimer. Requires Fe cation as cofactor.

It localises to the cytoplasm. The enzyme catalyses alpha-D-glucose 6-phosphate = beta-D-fructose 6-phosphate. The protein operates within carbohydrate degradation; glycolysis; D-glyceraldehyde 3-phosphate and glycerone phosphate from D-glucose: step 2/4. In Rhizobium meliloti (strain 1021) (Ensifer meliloti), this protein is Putative glucose-6-phosphate isomerase 1 (pgiA1).